Consider the following 217-residue polypeptide: MIRVNNVCKKYHTNSGWKTVLKNINFELQKGEKIGILGRNGAGKSTLIRLMSGVEPPTSGTIERSMSISWPLAFSGAFQGSLTGMDNLRFICRLYDVDPDYVTRFTKEFSELGDYLYEPVKKYSSGMKARLAFALSLSVEFDCYLIDEVIAVGDSRFAEKCKYELFEKRKDRSIILVSHSPSAMKSYCDNAVVLENGIMHHFEDMDKAYQYYNETQK.

Residues 2–217 enclose the ABC transporter domain; it reads IRVNNVCKKY…AYQYYNETQK (216 aa). 38 to 45 serves as a coordination point for ATP; it reads GRNGAGKS.

Belongs to the ABC transporter superfamily.

It is found in the cell inner membrane. Its function is as follows. Putative ATP-binding protein, and an energy-coupling component of capsule polysaccharide export apparatus. The chain is ATP-binding protein BexA (bexA) from Haemophilus influenzae.